Here is a 143-residue protein sequence, read N- to C-terminus: Nucleoside diphosphate kinase (143 aa).

Residues Lys-11, Phe-59, Arg-87, Thr-93, Arg-104, and Asn-114 each coordinate ATP. His-117 serves as the catalytic Pros-phosphohistidine intermediate.

It belongs to the NDK family. In terms of assembly, homotetramer. Requires Mg(2+) as cofactor.

It localises to the cytoplasm. It catalyses the reaction a 2'-deoxyribonucleoside 5'-diphosphate + ATP = a 2'-deoxyribonucleoside 5'-triphosphate + ADP. It carries out the reaction a ribonucleoside 5'-diphosphate + ATP = a ribonucleoside 5'-triphosphate + ADP. In terms of biological role, major role in the synthesis of nucleoside triphosphates other than ATP. The ATP gamma phosphate is transferred to the NDP beta phosphate via a ping-pong mechanism, using a phosphorylated active-site intermediate. This chain is Nucleoside diphosphate kinase, found in Pseudomonas aeruginosa (strain UCBPP-PA14).